Here is a 152-residue protein sequence, read N- to C-terminus: Natriuretic peptides A (152 aa).

The first 24 residues, 1-24 (MGSFSITKGFFLFLAFWLPGHIGA), serve as a signal peptide directing secretion. 2 consecutive propeptides follow at residues 25–122 (NPVY…AGPR) and 92–102 (DGGALGRGPWD). The tract at residues 54 to 104 (DEVMPPQALSEQTDEAGAALSSLSEVPPWTGEVNPSQRDGGALGRGPWDPS) is disordered. Phosphoserine is present on serine 128. Cysteine 129 and cysteine 145 are joined by a disulfide. The segment at 146-150 (NSFRY) is important for degradation of atrial natriuretic peptide by IDE.

Belongs to the natriuretic peptide family. Homodimer; disulfide-linked antiparallel dimer. Post-translationally, the precursor molecule is proteolytically cleaved by CORIN at Arg-122 to produce the atrial natriuretic peptide. Undergoes further proteolytic cleavage by unknown proteases to give rise to long-acting natriuretic peptide, vessel dilator and kaliuretic peptide. Additional processing gives rise to the auriculin and atriopeptin peptides. In the kidneys, alternative processing by an unknown protease results in the peptide urodilatin. In terms of processing, cleavage by MME initiates degradation of the factor and thereby regulates its activity. Degradation by IDE results in reduced activation of NPR1 (in vitro). During IDE degradation, the resulting products can temporarily stimulate NPR2 to produce cGMP, before the fragments are completely degraded and inactivated by IDE (in vitro). Degraded by IDE. Post-translationally, phosphorylation on Ser-128 decreases vasorelaxant activity. As to expression, high levels of expression in the atria compared to the ventricles. Very low levels of expression detected in extracardiac tissues such as the brain, hypothalamus, pituitary, lung and aorta. Atria (at protein level). In terms of tissue distribution, high levels of expression in the atria with very low levels of expression in the ventricles (at protein level). Relatively low levels of expression detected in the brain compared to the atria (at protein level).

The protein resides in the secreted. The protein localises to the perikaryon. It localises to the cell projection. Its function is as follows. Hormone that plays a key role in mediating cardio-renal homeostasis, and is involved in vascular remodeling and regulating energy metabolism. Acts by specifically binding and stimulating NPR1 to produce cGMP, which in turn activates effector proteins, such as PRKG1, that drive various biological responses. Regulates vasodilation, natriuresis, diuresis and aldosterone synthesis and is therefore essential for regulating blood pressure, controlling the extracellular fluid volume and maintaining the fluid-electrolyte balance. Also involved in inhibiting cardiac remodeling and cardiac hypertrophy by inducing cardiomyocyte apoptosis and attenuating the growth of cardiomyocytes and fibroblasts. Plays a role in female pregnancy by promoting trophoblast invasion and spiral artery remodeling in uterus, and thus prevents pregnancy-induced hypertension. In adipose tissue, acts in various cGMP- and PKG-dependent pathways to regulate lipid metabolism and energy homeostasis. This includes up-regulating lipid metabolism and mitochondrial oxygen utilization by activating the AMP-activated protein kinase (AMPK), and increasing energy expenditure by acting via MAPK11 to promote the UCP1-dependent thermogenesis of brown adipose tissue. Binds the clearance receptor NPR3 which removes the hormone from circulation. In terms of biological role, may have a role in cardio-renal homeostasis through regulation of natriuresis, diuresis, vasodilation, and inhibiting aldosterone synthesis. In vitro, promotes the production of cGMP and induces vasodilation. May promote natriuresis, at least in part, by enhancing prostaglandin E2 synthesis resulting in the inhibition of renal Na+-K+-ATPase. However reports on the involvement of this peptide in mammal blood volume and blood pressure homeostasis are conflicting; according to a report, in vivo it is not sufficient to activate cGMP and does not inhibit collecting duct transport nor effect diuresis and natriuresis. Appears to bind to specific receptors that are distinct from the receptors bound by atrial natriuretic peptide and vessel dilator. Possibly enhances protein excretion in urine by decreasing proximal tubular protein reabsorption. May have a role in cardio-renal homeostasis through regulation of natriuresis, diuresis, and vasodilation. In vitro, promotes the production of cGMP and induces vasodilation. May promote natriuresis, at least in part, by enhancing prostaglandin E2 synthesis resulting in the inhibition of renal Na+-K+-ATPase. However reports on the involvement of this peptide in mammal blood volume and blood pressure homeostasis are conflicting; according to a report, in vivo it is not sufficient to activate cGMP and does not inhibit collecting duct transport nor effect diuresis and natriuresis. Appears to bind to specific receptors that are distinct from the receptors bound by the atrial natriuretic and long-acting natriuretic peptides. Possibly functions in protein excretion in urine by maintaining the integrity of the proximal tubules and enhancing protein excretion by decreasing proximal tubular protein reabsorption. Functionally, may have a role in cardio-renal homeostasis through regulation of diuresis and inhibiting aldosterone synthesis. In vitro, promotes the production of cGMP and induces vasodilation. May promote natriuresis, at least in part, by enhancing prostaglandin E2 synthesis resulting in the inhibition of renal Na+-K+-ATPase. May have a role in potassium excretion but not sodium excretion (natriuresis). Possibly enhances protein excretion in urine by decreasing proximal tubular protein reabsorption. Its function is as follows. Hormone produced in the kidneys that appears to be important for maintaining cardio-renal homeostasis. Mediates vasodilation, natriuresis and diuresis primarily in the renal system, in order to maintain the extracellular fluid volume and control the fluid-electrolyte balance. Specifically binds and stimulates cGMP production by renal transmembrane receptors, likely NPR1. Urodilatin not ANP, may be the natriuretic peptide responsible for the regulation of sodium and water homeostasis in the kidney. In terms of biological role, may have a role in cardio-renal homeostasis through regulation of natriuresis and vasodilation. In vivo promotes natriuresis and in vitro, vasodilates renal artery strips. May have a role in cardio-renal homeostasis through regulation of regulation of natriuresis and vasodilation. In vivo promotes natriuresis. In vitro, vasodilates intestinal smooth muscle but not smooth muscle strips. Functionally, may have a role in cardio-renal homeostasis through regulation of natriuresis and vasodilation. In vivo promotes natriuresis. In vitro, selectively vasodilates intestinal and vascular smooth muscle strips. Its function is as follows. May have a role in cardio-renal homeostasis through regulation of natriuresis and vasodilation. In vivo promotes natriuresis. In vitro, selectively vasodilates intestinal smooth muscle but not vascular smooth muscle strips. This Rattus norvegicus (Rat) protein is Natriuretic peptides A (Nppa).